The primary structure comprises 337 residues: tRNA N6-adenosine threonylcarbamoyltransferase (337 aa).

Positions 111 and 115 each coordinate Fe cation. Residues Leu-134–Gly-138, Asp-167, Gly-180, and Asn-272 each bind substrate. Asp-300 lines the Fe cation pocket.

It belongs to the KAE1 / TsaD family. It depends on Fe(2+) as a cofactor.

The protein resides in the cytoplasm. It carries out the reaction L-threonylcarbamoyladenylate + adenosine(37) in tRNA = N(6)-L-threonylcarbamoyladenosine(37) in tRNA + AMP + H(+). Required for the formation of a threonylcarbamoyl group on adenosine at position 37 (t(6)A37) in tRNAs that read codons beginning with adenine. Is involved in the transfer of the threonylcarbamoyl moiety of threonylcarbamoyl-AMP (TC-AMP) to the N6 group of A37, together with TsaE and TsaB. TsaD likely plays a direct catalytic role in this reaction. This chain is tRNA N6-adenosine threonylcarbamoyltransferase, found in Salmonella choleraesuis (strain SC-B67).